Reading from the N-terminus, the 509-residue chain is 5-OH-xanthotoxin synthase (509 aa).

Residues 5–25 (AVVILLILAFPIASVYVLFYH) form a helical membrane-spanning segment. The substrate specificity stretch occupies residues 368–373 (TGALLI). Residue Cys449 coordinates heme.

The protein belongs to the cytochrome P450 family. Heme is required as a cofactor.

It is found in the microsome membrane. The enzyme catalyses xanthotoxin + reduced [NADPH--hemoprotein reductase] + O2 = 5-hydroxyxanthotoxin + oxidized [NADPH--hemoprotein reductase] + H2O + 2 H(+). The protein operates within secondary metabolite biosynthesis. In terms of biological role, involved in the biosynthesis of coumarins and furanocoumarins (FCs), natural products required for defense responses against attacks by predators with potential medical and agroindustrial usages such as anticoagulant, rodenticide and artificial vanilla substitutes. Catalyzes the conversion of xanthotoxin into 5-hydroxyxanthotoxin. In Ammi majus (Bishop's weed), this protein is 5-OH-xanthotoxin synthase.